The primary structure comprises 495 residues: Putative aldehyde dehydrogenase AldA (495 aa).

212 to 218 (GKGSESG) contacts NAD(+). Residues Glu-256 and Cys-290 contribute to the active site.

The protein belongs to the aldehyde dehydrogenase family.

It catalyses the reaction an aldehyde + NAD(+) + H2O = a carboxylate + NADH + 2 H(+). In Staphylococcus aureus (strain MSSA476), this protein is Putative aldehyde dehydrogenase AldA (aldA).